Consider the following 419-residue polypeptide: Creatine kinase S-type, mitochondrial (419 aa).

The transit peptide at 1–39 (MAGTFGRLLAGRVTAALFAAAGSGVLTTGYLLNQQNVKA) directs the protein to the mitochondrion. Residues 46–132 (KLFPPSADYP…FDPVIKARHN (87 aa)) enclose the Phosphagen kinase N-terminal domain. The region spanning 159-401 (YVLSSRVRTG…NYLVDCEKKL (243 aa)) is the Phosphagen kinase C-terminal domain. ATP is bound by residues 162-166 (SSRVR), H225, R270, R326, 354-359 (RGTGGV), and D369.

It belongs to the ATP:guanido phosphotransferase family. Exists as an octamer composed of four MTCK homodimers. In terms of tissue distribution, expressed in the leg muscle and heart.

Its subcellular location is the mitochondrion inner membrane. The catalysed reaction is creatine + ATP = N-phosphocreatine + ADP + H(+). Its function is as follows. Reversibly catalyzes the transfer of phosphate between ATP and various phosphogens (e.g. creatine phosphate). Creatine kinase isoenzymes play a central role in energy transduction in tissues with large, fluctuating energy demands, such as skeletal muscle, heart, brain and spermatozoa. In Gallus gallus (Chicken), this protein is Creatine kinase S-type, mitochondrial (CKMT2).